The primary structure comprises 186 residues: UPF0200 protein PH1008 (186 aa).

Position 7–14 (7–14 (GMPGSGKG)) interacts with ATP.

The protein belongs to the UPF0200 family.

The polypeptide is UPF0200 protein PH1008 (Pyrococcus horikoshii (strain ATCC 700860 / DSM 12428 / JCM 9974 / NBRC 100139 / OT-3)).